The primary structure comprises 192 residues: Protein MTH_857 (192 aa).

The AMMECR1 domain maps to 9-192; sequence DEGRTLVKIA…FQAQIFHEDG (184 aa).

This Methanothermobacter thermautotrophicus (strain ATCC 29096 / DSM 1053 / JCM 10044 / NBRC 100330 / Delta H) (Methanobacterium thermoautotrophicum) protein is Protein MTH_857.